Here is a 240-residue protein sequence, read N- to C-terminus: Thymidylate kinase (240 aa).

Position 10-17 (Gly10–Ser17) interacts with ATP.

The protein belongs to the thymidylate kinase family.

The catalysed reaction is dTMP + ATP = dTDP + ADP. The protein operates within pyrimidine metabolism; dTTP biosynthesis. Functionally, catalyzes the conversion of dTMP to dTDP. This is Thymidylate kinase (TMK) from African swine fever virus (strain Badajoz 1971 Vero-adapted) (Ba71V).